A 70-amino-acid chain; its full sequence is Large ribosomal subunit protein bL32 (70 aa).

Positions 1 to 19 (MAVPKRKTTPSRRGMRRSH) are enriched in basic residues. The disordered stretch occupies residues 1-21 (MAVPKRKTTPSRRGMRRSHQA).

Belongs to the bacterial ribosomal protein bL32 family.

The sequence is that of Large ribosomal subunit protein bL32 from Gluconobacter oxydans (strain 621H) (Gluconobacter suboxydans).